The chain runs to 169 residues: Cell division inhibitor SulA (169 aa).

Over residues 1–16 the composition is skewed to polar residues; the sequence is MFTSAHANRSPLTSAS. Residues 1–20 form a disordered region; that stretch reads MFTSAHANRSPLTSASVRRP. The interval 106–112 is ftsZ binding; that stretch reads ALRTGNY. Residues 162-169 form a lon protease binding region; it reads KIHSNLYH.

The protein belongs to the SulA family. In terms of assembly, interacts with FtsZ. Is rapidly cleaved and degraded by the Lon protease once DNA damage is repaired.

Functionally, component of the SOS system and an inhibitor of cell division. Accumulation of SulA causes rapid cessation of cell division and the appearance of long, non-septate filaments. In the presence of GTP, binds a polymerization-competent form of FtsZ in a 1:1 ratio, thus inhibiting FtsZ polymerization and therefore preventing it from participating in the assembly of the Z ring. This mechanism prevents the premature segregation of damaged DNA to daughter cells during cell division. This is Cell division inhibitor SulA from Klebsiella aerogenes (Enterobacter aerogenes).